The primary structure comprises 188 residues: MAFPTPAQLTEILQPVAAARGLDIEDVKTTRAGKKSQVIIRIDGDERPSSDLIEELSQEISEIFDAQEEAGTLNFGAGYTLEVSTPGVDFPLSASRHWRRNQGRLVGYALAEEPGTTRVARIGALSEDEESVALITMVKKEVRYQIERLENLSRAVVEIEFAQPSAVELEAAMQTFDFAEQNSATRED.

It belongs to the RimP family.

The protein resides in the cytoplasm. Required for maturation of 30S ribosomal subunits. This Corynebacterium aurimucosum (strain ATCC 700975 / DSM 44827 / CIP 107346 / CN-1) (Corynebacterium nigricans) protein is Ribosome maturation factor RimP.